A 245-amino-acid polypeptide reads, in one-letter code: Large ribosomal subunit protein uL29m (245 aa).

Low complexity-rich tracts occupy residues 36–49 (SFNS…TSSS) and 234–245 (STKSETTTSKNI). Disordered regions lie at residues 36–98 (SFNS…NPDH) and 207–245 (RPSP…SKNI).

This sequence belongs to the universal ribosomal protein uL29 family. In terms of assembly, component of the mitochondrial large ribosomal subunit. Mature mitochondrial ribosomes consist of a small (37S) and a large (54S) subunit. The 37S subunit contains at least 33 different proteins and 1 molecule of RNA (15S). The 54S subunit contains at least 45 different proteins and 1 molecule of RNA (21S).

Its subcellular location is the mitochondrion. This Coccidioides immitis (strain RS) (Valley fever fungus) protein is Large ribosomal subunit protein uL29m (MRPL4).